The sequence spans 289 residues: Prepilin leader peptidase/N-methyltransferase (289 aa).

Residues 13 to 33 (AFVLCALVLGLLVGSFLNVVI) traverse the membrane as a helical segment. Zn(2+)-binding residues include Cys-72, Cys-75, Cys-97, and Cys-100. 5 consecutive transmembrane segments (helical) span residues 128-148 (FSWQAGAMLLLTWGLLAMSMI), 159-179 (LVLPLLWLGLIINSFGLFASL), 183-203 (LWGAVVGYLALWSVYWLFKLV), 228-248 (VLPLTILLSSVVGAVLGTVML), and 256-276 (GTPIPFGPYLAIAGWVALLWG).

The protein belongs to the peptidase A24 family. Zn(2+) is required as a cofactor.

It localises to the cell inner membrane. It catalyses the reaction Typically cleaves a -Gly-|-Phe- bond to release an N-terminal, basic peptide of 5-8 residues from type IV prepilin, and then N-methylates the new N-terminal amino group, the methyl donor being S-adenosyl-L-methionine.. Its function is as follows. Plays an essential role in type IV pili and type II pseudopili formation by proteolytically removing the leader sequence from substrate proteins and subsequently monomethylating the alpha-amino group of the newly exposed N-terminal phenylalanine. The sequence is that of Prepilin leader peptidase/N-methyltransferase (pilD) from Stutzerimonas stutzeri (Pseudomonas stutzeri).